A 564-amino-acid polypeptide reads, in one-letter code: Efflux pump hmp6 (564 aa).

Residues 1–25 (MEKHAEPEKSLGDKEFQEKELHEKP) are compositionally biased toward basic and acidic residues. Positions 1-46 (MEKHAEPEKSLGDKEFQEKELHEKPAPAASEDISGDSSVNKEDGPD) are disordered. A run of 8 helical transmembrane segments spans residues 58-78 (LAVV…DTTI), 96-118 (VGWY…GKLY), 125-145 (IVFT…GVAP), 156-176 (IAGL…IHSV), 186-206 (GMIV…GGAF), 214-234 (WCFY…LFFF), 259-279 (FGTF…QMGG), and 289-309 (IIVL…VQFF). N-linked (GlcNAc...) asparagine glycans are attached at residues asparagine 312 and asparagine 322. A run of 4 helical transmembrane segments spans residues 330 to 350 (IYMF…PIWF), 361 to 383 (SGIR…GALV), 395 to 415 (ASVV…VDAS), and 452 to 472 (IGTA…VSAA).

Belongs to the major facilitator superfamily. TCR/Tet family.

The protein resides in the cell membrane. Its function is as follows. Efflux pump that might be required for efficient secretion of hypothemycin or other secondary metabolies produced by the hypothemycin gene cluster. The chain is Efflux pump hmp6 from Hypomyces subiculosus (Nectria subiculosa).